The following is a 528-amino-acid chain: Bifunctional purine biosynthesis protein PurH (528 aa).

Positions 1 to 146 (MAPTALLSVS…KNHDHVAVLT (146 aa)) constitute an MGS-like domain.

It belongs to the PurH family.

It catalyses the reaction (6R)-10-formyltetrahydrofolate + 5-amino-1-(5-phospho-beta-D-ribosyl)imidazole-4-carboxamide = 5-formamido-1-(5-phospho-D-ribosyl)imidazole-4-carboxamide + (6S)-5,6,7,8-tetrahydrofolate. The catalysed reaction is IMP + H2O = 5-formamido-1-(5-phospho-D-ribosyl)imidazole-4-carboxamide. It functions in the pathway purine metabolism; IMP biosynthesis via de novo pathway; 5-formamido-1-(5-phospho-D-ribosyl)imidazole-4-carboxamide from 5-amino-1-(5-phospho-D-ribosyl)imidazole-4-carboxamide (10-formyl THF route): step 1/1. The protein operates within purine metabolism; IMP biosynthesis via de novo pathway; IMP from 5-formamido-1-(5-phospho-D-ribosyl)imidazole-4-carboxamide: step 1/1. The protein is Bifunctional purine biosynthesis protein PurH of Synechococcus sp. (strain WH7803).